A 284-amino-acid chain; its full sequence is Averufin oxidase A (284 aa).

A signal peptide spans 1–23 (MPTYALLGATGATGSAILRCLLA). Asn62, Asn86, and Asn190 each carry an N-linked (GlcNAc...) asparagine glycan.

The protein belongs to the avfA family.

It participates in mycotoxin biosynthesis. In terms of biological role, averufin oxidase A; part of the fragmented gene cluster that mediates the biosynthesis of dothistromin (DOTH), a polyketide toxin very similar in structure to the aflatoxin precursor, versicolorin B. The first step of the pathway is the conversion of acetate to norsolorinic acid (NOR) and requires the fatty acid synthase subunits hexA and hexB, as well as the polyketide synthase pksA. PksA combines a hexanoyl starter unit and 7 malonyl-CoA extender units to synthesize the precursor NOR. The hexanoyl starter unit is provided to the acyl-carrier protein (ACP) domain by the fungal fatty acid synthase hexA/hexB. The second step is the conversion of NOR to averantin (AVN) and requires the norsolorinic acid ketoreductase nor1, which catalyzes the dehydration of norsolorinic acid to form (1'S)-averantin. The cytochrome P450 monooxygenase avnA then catalyzes the hydroxylation of AVN to 5'hydroxyaverantin (HAVN). The next step is performed by adhA that transforms HAVN to averufin (AVF). Averufin might then be converted to hydroxyversicolorone by cypX and avfA. Hydroxyversicolorone is further converted versiconal hemiacetal acetate (VHA) by moxY. VHA is then the substrate for the versiconal hemiacetal acetate esterase est1 to yield versiconal (VAL). Versicolorin B synthase vbsA then converts VAL to versicolorin B (VERB) by closing the bisfuran ring. Then, the activity of the versicolorin B desaturase verB leads to versicolorin A (VERA). DotB, a predicted chloroperoxidase, may perform epoxidation of the A-ring of VERA. Alternatively, a cytochrome P450, such as cypX or avnA could catalyze this step. It is also possible that another, uncharacterized, cytochrome P450 enzyme is responsible for this step. Opening of the epoxide could potentially be achieved by the epoxide hydrolase epoA. However, epoA seems not to be required for DOTH biosynthesis, but other epoxide hydrolases may have the ability to complement this hydrolysis. Alternatively, opening of the epoxide ring could be achieved non-enzymatically. The next step is the deoxygenation of ring A to yield the 5,8-dihydroxyanthraquinone which is most likely catalyzed by the NADPH dehydrogenase encoded by ver1. The last stages of DOTH biosynthesis are proposed to involve hydroxylation of the bisfuran. OrdB and norB might have oxidative roles here. An alternative possibility is that cytochrome P450 monoogenases such as avnA and cypX might perform these steps in addition to previously proposed steps. This is Averufin oxidase A from Dothistroma septosporum (strain NZE10 / CBS 128990) (Red band needle blight fungus).